Here is a 420-residue protein sequence, read N- to C-terminus: Exodeoxyribonuclease 7 large subunit (420 aa).

It belongs to the XseA family. Heterooligomer composed of large and small subunits.

The protein resides in the cytoplasm. The enzyme catalyses Exonucleolytic cleavage in either 5'- to 3'- or 3'- to 5'-direction to yield nucleoside 5'-phosphates.. Bidirectionally degrades single-stranded DNA into large acid-insoluble oligonucleotides, which are then degraded further into small acid-soluble oligonucleotides. The sequence is that of Exodeoxyribonuclease 7 large subunit from Helicobacter pylori (strain G27).